Reading from the N-terminus, the 286-residue chain is Alpha-ketoglutarate-dependent dioxygenase alkB homolog 3 (286 aa).

The segment at 1–38 (MEDKRRRARVQGAWAGPAKSQATAQPAPTAENNLQQRP) is disordered. The segment covering 20-36 (SQATAQPAPTAENNLQQ) has biased composition (polar residues). Substrate is bound by residues W115 and 141 to 143 (YTY). A Fe2OG dioxygenase domain is found at 172 to 278 (SFNSLLCNLY…RINLTFRTVY (107 aa)). L177 carries the (4R)-5-hydroxyleucine; alternate modification. L177 carries the post-translational modification (4R)-5-oxoleucine; alternate. 179-181 (NLY) contributes to the 2-oxoglutarate binding site. The Fe cation site is built by H191 and D193. D194 provides a ligand contact to substrate. H257 contacts Fe cation. 2-oxoglutarate contacts are provided by residues 269–275 (RINLTFR) and R275.

This sequence belongs to the alkB family. In terms of assembly, interacts with the ASCC complex composed of ASCC1, ASCC2 and ASCC3. Interacts directly with ASCC3, and is thereby recruited to the ASCC complex. Interacts with OTUD4; the interaction is direct. Interacts with USP7 and USP9X. Fe(2+) serves as cofactor. In terms of processing, ubiquitinated; undergoes 'Lys-48'-linked polyubiquitination. OTUD4 promotes USP7 and USP9X-dependent deubiquitination of 'Lys-48'-polyubiquitinated ALKBH3 promoting the repair of alkylated DNA lesions.

The protein localises to the nucleus. It localises to the cytoplasm. The catalysed reaction is an N(1)-methyladenosine in mRNA + 2-oxoglutarate + O2 = an adenosine in mRNA + formaldehyde + succinate + CO2. It catalyses the reaction a methylated nucleobase within DNA + 2-oxoglutarate + O2 = a nucleobase within DNA + formaldehyde + succinate + CO2. The enzyme catalyses an N(1)-methyl-2'-deoxyadenosine in single-stranded DNA + 2-oxoglutarate + O2 = a 2'-deoxyadenosine in single-stranded DNA + formaldehyde + succinate + CO2 + H(+). It carries out the reaction an N(3)-methyl-2'-deoxycytidine in single-stranded DNA + 2-oxoglutarate + O2 = a 2'-deoxycytidine in single-stranded DNA + formaldehyde + succinate + CO2 + H(+). The catalysed reaction is a 3,N(4)-etheno-2'-deoxycytidine in single-stranded DNA + 2-oxoglutarate + O2 + H2O = a 2'-deoxycytidine in single-stranded DNA + glyoxal + succinate + CO2. With respect to regulation, activated by ascorbate. In terms of biological role, dioxygenase that mediates demethylation of DNA and RNA containing 1-methyladenosine (m1A). Repairs alkylated DNA containing 1-methyladenosine (m1A) and 3-methylcytosine (m3C) by oxidative demethylation. Has a strong preference for single-stranded DNA. Able to process alkylated m3C within double-stranded regions via its interaction with ASCC3, which promotes DNA unwinding to generate single-stranded substrate needed for ALKBH3. Can repair exocyclic 3,N4-ethenocytosine adducs in single-stranded DNA. Also acts on RNA. Demethylates N(1)-methyladenosine (m1A) RNA, an epigenetic internal modification of messenger RNAs (mRNAs) highly enriched within 5'-untranslated regions (UTRs) and in the vicinity of start codons. Requires molecular oxygen, alpha-ketoglutarate and iron. The polypeptide is Alpha-ketoglutarate-dependent dioxygenase alkB homolog 3 (Bos taurus (Bovine)).